A 198-amino-acid polypeptide reads, in one-letter code: Glycerol-3-phosphate acyltransferase (198 aa).

A run of 4 helical transmembrane segments spans residues 3-23 (VEWLLIPFAYLLGSVSSAVIV), 81-101 (LFAAIGFAAFVGHLYPVFFQF), 113-133 (VLLGFAWPVGLMALLTWIGVA), and 153-175 (YVWLWLGSAELVVATLFMSMLLV).

This sequence belongs to the PlsY family. As to quaternary structure, probably interacts with PlsX.

It is found in the cell inner membrane. The catalysed reaction is an acyl phosphate + sn-glycerol 3-phosphate = a 1-acyl-sn-glycero-3-phosphate + phosphate. It functions in the pathway lipid metabolism; phospholipid metabolism. Catalyzes the transfer of an acyl group from acyl-phosphate (acyl-PO(4)) to glycerol-3-phosphate (G3P) to form lysophosphatidic acid (LPA). This enzyme utilizes acyl-phosphate as fatty acyl donor, but not acyl-CoA or acyl-ACP. This Methylococcus capsulatus (strain ATCC 33009 / NCIMB 11132 / Bath) protein is Glycerol-3-phosphate acyltransferase.